Reading from the N-terminus, the 410-residue chain is Adenosine receptor A2a (410 aa).

The Extracellular segment spans residues 1-4 (MGSS). Residues 5 to 29 (VYIMVELAIAVLAILGNVLVCWAVW) form a helical membrane-spanning segment. Topologically, residues 30 to 39 (INSNLQNVTN) are cytoplasmic. A helical membrane pass occupies residues 40 to 63 (FFVVSLAAADIAVGVLAIPFAITI). Residues 64–74 (STGFCAACHGC) lie on the Extracellular side of the membrane. 3 disulfide bridges follow: C68/C154, C71/C143, and C74/C161. A helical transmembrane segment spans residues 75–97 (LFFACFVLVLTQSSIFSLLAIAI). Residues 98-117 (DRYIAIRIPLRYNGLVTGMR) are Cytoplasmic-facing. Residues 118-140 (AKGIIAICWVLSFAIGLTPMLGW) form a helical membrane-spanning segment. Topologically, residues 141–168 (NNCSQKDENSTKTCGEGRVTCLFEDVVP) are extracellular. 2 N-linked (GlcNAc...) asparagine glycosylation sites follow: N142 and N149. E164 contacts adenosine. Residues 169–193 (MNYMVYYNFFAFVLLPLLLMLAIYL) traverse the membrane as a helical segment. The Cytoplasmic portion of the chain corresponds to 194–229 (RIFLAARRQLKQMESQPLPGERTRSTLQKEVHAAKS). Residues 230–253 (LAIIVGLFALCWLPLHIINCFTFF) traverse the membrane as a helical segment. Residue N248 coordinates adenosine. C254 and C257 form a disulfide bridge. The Extracellular portion of the chain corresponds to 254–261 (CSTCQHAP). Residues 262–285 (PWLMYLAIILSHSNSVVNPFIYAY) form a helical membrane-spanning segment. Residues S272 and H273 each coordinate adenosine. The Cytoplasmic segment spans residues 286–410 (RIREFRQTFR…ASWSSEFAPS (125 aa)). Residues 322–410 (HSTEGEQVSL…ASWSSEFAPS (89 aa)) form an interaction with GAS2L2 region. Residues 342-410 (ANGSAPHSGR…ASWSSEFAPS (69 aa)) are disordered. The span at 377–389 (TQEHQEGQEHPGL) shows a compositional bias: basic and acidic residues. Over residues 401-410 (ASWSSEFAPS) the composition is skewed to polar residues.

Belongs to the G-protein coupled receptor 1 family. Interacts (via cytoplasmic C-terminal domain) with USP4; the interaction is direct. May interact with DRD4. Interacts with NECAB2. Interacts (via cytoplasmic C-terminal domain) with GAS2L2; interaction enhances receptor-mediated adenylyl cyclase activity. Ubiquitinated. Deubiquitinated by USP4; leading to stabilization and expression at the cell surface.

The protein resides in the cell membrane. Functionally, receptor for adenosine. The activity of this receptor is mediated by G proteins which activate adenylyl cyclase. The polypeptide is Adenosine receptor A2a (Adora2a) (Mus musculus (Mouse)).